We begin with the raw amino-acid sequence, 194 residues long: Imidazoleglycerol-phosphate dehydratase (194 aa).

The protein belongs to the imidazoleglycerol-phosphate dehydratase family.

The protein resides in the cytoplasm. The enzyme catalyses D-erythro-1-(imidazol-4-yl)glycerol 3-phosphate = 3-(imidazol-4-yl)-2-oxopropyl phosphate + H2O. It functions in the pathway amino-acid biosynthesis; L-histidine biosynthesis; L-histidine from 5-phospho-alpha-D-ribose 1-diphosphate: step 6/9. This chain is Imidazoleglycerol-phosphate dehydratase, found in Halalkalibacterium halodurans (strain ATCC BAA-125 / DSM 18197 / FERM 7344 / JCM 9153 / C-125) (Bacillus halodurans).